The primary structure comprises 609 residues: UvrABC system protein C (609 aa).

The GIY-YIG domain occupies 16 to 94 (SSPGVYRMYD…IKQYMPKYNV (79 aa)). Positions 203 to 238 (HQVMSVLVGKMEQAASDMRYEQAALYRDQITALRRV) constitute a UVR domain.

It belongs to the UvrC family. In terms of assembly, interacts with UvrB in an incision complex.

It is found in the cytoplasm. In terms of biological role, the UvrABC repair system catalyzes the recognition and processing of DNA lesions. UvrC both incises the 5' and 3' sides of the lesion. The N-terminal half is responsible for the 3' incision and the C-terminal half is responsible for the 5' incision. In Shewanella halifaxensis (strain HAW-EB4), this protein is UvrABC system protein C.